The sequence spans 355 residues: (3aS,4S,5R,7aS)-5-hydroxy-7a-methyl-1-oxo-octahydro-1H-indene-4-carboxyl-CoA dehydrogenase (355 aa).

FMN is bound by residues 21–23, 173–175, and 196–197; these read GMG, AGG, and GT.

This sequence belongs to the nitronate monooxygenase family.

The enzyme catalyses (3aS,4S,5R,7aS)-5-hydroxy-7a-methyl-1-oxo-octahydro-1H-indene-4-carboxyl-CoA + NAD(+) = (5R,7aS)-5-hydroxy-7a-methyl-1-oxo-2,3,5,6,7,7a-hexahydro-1H-indene-carboxyl-CoA + NADH + H(+). The protein operates within steroid metabolism; cholesterol degradation. Requires the presence of IpdF. Functionally, involved in the final steps of cholesterol and steroid degradation. Probably catalyzes the introduction of a double bound into the C ring of 5OH-HIC-CoA, leading to the formation of (5R,7aS)-5-hydroxy-7a-methyl-1-oxo-3,5,6,7-tetrahydro-2H-indene-4-carboxyl-CoA. The chain is (3aS,4S,5R,7aS)-5-hydroxy-7a-methyl-1-oxo-octahydro-1H-indene-4-carboxyl-CoA dehydrogenase from Mycobacterium tuberculosis (strain ATCC 25618 / H37Rv).